Consider the following 306-residue polypeptide: Nod factor export ATP-binding protein I (306 aa).

Residues 8-238 form the ABC transporter domain; the sequence is IDLVGVRKSF…HIGCNVIEIY (231 aa). Residue 40 to 47 coordinates ATP; it reads GPNGAGKS.

This sequence belongs to the ABC transporter superfamily. Lipooligosaccharide exporter (TC 3.A.1.102) family. As to quaternary structure, the complex is composed of two ATP-binding proteins (NodI) and two transmembrane proteins (NodJ).

Its subcellular location is the cell inner membrane. Its function is as follows. Part of the ABC transporter complex NodIJ involved in the export of the nodulation factors (Nod factors), the bacterial signal molecules that induce symbiosis and subsequent nodulation induction. Nod factors are LCO (lipo-chitin oligosaccharide), a modified beta-1,4-linked N-acetylglucosamine oligosaccharide. This subunit is responsible for energy coupling to the transport system. This is Nod factor export ATP-binding protein I from Bradyrhizobium diazoefficiens (strain JCM 10833 / BCRC 13528 / IAM 13628 / NBRC 14792 / USDA 110).